A 261-amino-acid polypeptide reads, in one-letter code: 6-phosphogluconolactonase (261 aa).

The protein belongs to the glucosamine/galactosamine-6-phosphate isomerase family. 6-phosphogluconolactonase subfamily.

It catalyses the reaction 6-phospho-D-glucono-1,5-lactone + H2O = 6-phospho-D-gluconate + H(+). It participates in carbohydrate degradation; pentose phosphate pathway; D-ribulose 5-phosphate from D-glucose 6-phosphate (oxidative stage): step 2/3. In terms of biological role, hydrolysis of 6-phosphogluconolactone to 6-phosphogluconate. This Streptomyces coelicolor (strain ATCC BAA-471 / A3(2) / M145) protein is 6-phosphogluconolactonase (pgl).